Consider the following 99-residue polypeptide: Nucleoid-associated protein LACR_0106 (99 aa).

This sequence belongs to the YbaB/EbfC family. Homodimer.

The protein localises to the cytoplasm. It is found in the nucleoid. Binds to DNA and alters its conformation. May be involved in regulation of gene expression, nucleoid organization and DNA protection. This Lactococcus lactis subsp. cremoris (strain SK11) protein is Nucleoid-associated protein LACR_0106.